The following is a 145-amino-acid chain: ATP synthase epsilon chain (145 aa).

Positions 93–104 (AEAEKARARAQE) are enriched in basic and acidic residues. The disordered stretch occupies residues 93–113 (AEAEKARARAQEALKNPDASK).

The protein belongs to the ATPase epsilon chain family. In terms of assembly, F-type ATPases have 2 components, CF(1) - the catalytic core - and CF(0) - the membrane proton channel. CF(1) has five subunits: alpha(3), beta(3), gamma(1), delta(1), epsilon(1). CF(0) has three main subunits: a, b and c.

The protein localises to the cell inner membrane. Functionally, produces ATP from ADP in the presence of a proton gradient across the membrane. This chain is ATP synthase epsilon chain, found in Francisella philomiragia subsp. philomiragia (strain ATCC 25017 / CCUG 19701 / FSC 153 / O#319-036).